The sequence spans 55 residues: Small ribosomal subunit protein eS31 (55 aa).

Positions 26, 29, 44, and 47 each coordinate Zn(2+).

Belongs to the eukaryotic ribosomal protein eS31 family. Part of the 30S ribosomal subunit. Zn(2+) is required as a cofactor.

The chain is Small ribosomal subunit protein eS31 from Archaeoglobus fulgidus (strain ATCC 49558 / DSM 4304 / JCM 9628 / NBRC 100126 / VC-16).